A 977-amino-acid chain; its full sequence is ELMO domain-containing protein A (977 aa).

The 179-residue stretch at 383 to 561 folds into the ELMO domain; sequence EHDALLMKLW…SVKNLIITAL (179 aa). 2 stretches are compositionally biased toward low complexity: residues 792-838 and 852-897; these read SSNN…NNSG and QQQQ…SSSS. Positions 792 to 899 are disordered; that stretch reads SSNNNIKDNL…SSSSSSSSNP (108 aa).

In terms of assembly, associates with mhcA.

In terms of biological role, functions as a negative regulator of actin polymerization. Modulates actin/myosin II at cortex actinomyosins to prevent excessive F-actin polymerization around the cell periphery, thereby maintaining proper cell shape during phagocytosis and chemotaxis. The protein is ELMO domain-containing protein A (elmoA) of Dictyostelium discoideum (Social amoeba).